Here is a 302-residue protein sequence, read N- to C-terminus: Aliphatic sulfonates import ATP-binding protein SsuB (302 aa).

Residues 30–57 (PATADAQHTADAQHTADAQHTADAQHTA) show a composition bias toward low complexity. The disordered stretch occupies residues 30–65 (PATADAQHTADAQHTADAQHTADAQHTAETAETRGA). The 215-residue stretch at 70-284 (IRIRGLRRTF…RRTDPAFDRL (215 aa)) folds into the ABC transporter domain. ATP is bound at residue 102–109 (GRSGSGKS).

The protein belongs to the ABC transporter superfamily. Aliphatic sulfonates importer (TC 3.A.1.17.2) family. The complex is composed of two ATP-binding proteins (SsuB), two transmembrane proteins (SsuC) and a solute-binding protein (SsuA).

The protein localises to the cell membrane. The catalysed reaction is ATP + H2O + aliphatic sulfonate-[sulfonate-binding protein]Side 1 = ADP + phosphate + aliphatic sulfonateSide 2 + [sulfonate-binding protein]Side 1.. Functionally, part of the ABC transporter complex SsuABC involved in aliphatic sulfonates import. Responsible for energy coupling to the transport system. The chain is Aliphatic sulfonates import ATP-binding protein SsuB from Frankia casuarinae (strain DSM 45818 / CECT 9043 / HFP020203 / CcI3).